The chain runs to 349 residues: Rhodopsin (349 aa).

Residues threonine 1–alanine 33 lie on the Extracellular side of the membrane. An N-linked (GlcNAc...) asparagine glycan is attached at asparagine 12. A helical transmembrane segment spans residues phenylalanine 34–valine 58. Over threonine 59–asparagine 70 the chain is Cytoplasmic. The helical transmembrane segment at tyrosine 71 to tyrosine 93 threads the bilayer. Over threonine 94–cysteine 107 the chain is Extracellular. Residues cysteine 107 and cysteine 184 are joined by a disulfide bond. A helical transmembrane segment spans residues asparagine 108–valine 130. A 'Ionic lock' involved in activated form stabilization motif is present at residues glutamate 131 to tryptophan 133. Residues glutamate 131–histidine 149 lie on the Cytoplasmic side of the membrane. Residues alanine 150–valine 170 traverse the membrane as a helical segment. The Extracellular portion of the chain corresponds to glycine 171–serine 199. Asparagine 197 is a glycosylation site (N-linked (GlcNAc...) asparagine). The helical transmembrane segment at phenylalanine 200 to glycine 221 threads the bilayer. Over arginine 222 to arginine 249 the chain is Cytoplasmic. The chain crosses the membrane as a helical span at residues methionine 250–tyrosine 271. Residues isoleucine 272–leucine 283 are Extracellular-facing. The helical transmembrane segment at phenylalanine 284–cysteine 305 threads the bilayer. Lysine 293 carries the post-translational modification N6-(retinylidene)lysine. Residues leucine 306–alanine 349 are Cytoplasmic-facing. Cysteine 320 carries the S-palmitoyl cysteine lipid modification. The segment at glutamate 326 to alanine 349 is disordered. Over residues alanine 331–alanine 349 the composition is skewed to low complexity.

Belongs to the G-protein coupled receptor 1 family. Opsin subfamily. Phosphorylated on some or all of the serine and threonine residues present in the C-terminal region. In terms of processing, contains one covalently linked retinal chromophore.

The protein localises to the membrane. Its subcellular location is the cell projection. It localises to the cilium. The protein resides in the photoreceptor outer segment. Functionally, photoreceptor required for image-forming vision at low light intensity. While most salt water fish species use retinal as chromophore, most freshwater fish use 3-dehydroretinal, or a mixture of retinal and 3-dehydroretinal. Light-induced isomerization of 11-cis to all-trans retinal triggers a conformational change that activates signaling via G-proteins. Subsequent receptor phosphorylation mediates displacement of the bound G-protein alpha subunit by arrestin and terminates signaling. This is Rhodopsin (rho) from Myripristis berndti (Bigscale soldierfish).